A 402-amino-acid chain; its full sequence is APO protein 3, mitochondrial (402 aa).

A mitochondrion-targeting transit peptide spans 1–13 (MQRRKLVEISIFV). Residues 37–59 (NDEDPLYADVPKPPKDKSERKPY) form a disordered region. Residues 48-58 (KPPKDKSERKP) show a composition bias toward basic and acidic residues. APO domains follow at residues 127 to 213 (RCRL…DLEK) and 294 to 380 (TCGY…PVPD).

This sequence belongs to the APO family.

Its subcellular location is the mitochondrion. May be involved in the stable assembly of several 4Fe-4S cluster-containing complexes of mitochondria. The chain is APO protein 3, mitochondrial (APO3) from Arabidopsis thaliana (Mouse-ear cress).